We begin with the raw amino-acid sequence, 444 residues long: tRNA-2-methylthio-N(6)-dimethylallyladenosine synthase (444 aa).

Residues 6-124 enclose the MTTase N-terminal domain; sequence KTFKIITYGC…LPQLIEEIKA (119 aa). [4Fe-4S] cluster is bound by residues cysteine 15, cysteine 51, cysteine 85, cysteine 161, cysteine 165, and cysteine 168. In terms of domain architecture, Radical SAM core spans 147–377; it reads RARGAQAFVT…MELQNSISLA (231 aa). Residues 380-443 form the TRAM domain; that stretch reads EALVGQEVEV…TWLLKGEMVD (64 aa).

It belongs to the methylthiotransferase family. MiaB subfamily. In terms of assembly, monomer. [4Fe-4S] cluster is required as a cofactor.

The protein localises to the cytoplasm. The enzyme catalyses N(6)-dimethylallyladenosine(37) in tRNA + (sulfur carrier)-SH + AH2 + 2 S-adenosyl-L-methionine = 2-methylsulfanyl-N(6)-dimethylallyladenosine(37) in tRNA + (sulfur carrier)-H + 5'-deoxyadenosine + L-methionine + A + S-adenosyl-L-homocysteine + 2 H(+). In terms of biological role, catalyzes the methylthiolation of N6-(dimethylallyl)adenosine (i(6)A), leading to the formation of 2-methylthio-N6-(dimethylallyl)adenosine (ms(2)i(6)A) at position 37 in tRNAs that read codons beginning with uridine. The chain is tRNA-2-methylthio-N(6)-dimethylallyladenosine synthase from Moorella thermoacetica (strain ATCC 39073 / JCM 9320).